A 388-amino-acid chain; its full sequence is MKILYFDCFAGIAGDMTVAALLDLGVPFEVVRDAVGCLRLPHSSYSLATERTSRKGITATRFVVHVEEHQPNRHYGDIAAMIEESPLADGIKEKAQRIFFRLAEAEAKVHGVELGRVHFHEVGAVDSIADIVGAAAAIDWLGIESIHGGALPLGSGFVETAHGRLPVPAPATAELLRGIPVHGEAGPGERVTPTGAAILAALAAGFGPIPPMTVTGVGCGAGTRDFADIPNILRVFQGEIDRGFERDDVVVIEAHIDDTSPEILGYVMERCLAAGALDAAFSPLQMKKNRPAVRLTVVVHPEQRDELAALILRETSAIGVRFHPAGRLKLRRLVEERDTTLGRVRVKVINGDGVARVAPEYDDCCRIAAERGMPLMEVYRIVERECGQ.

This sequence belongs to the LarC family.

This is Putative nickel insertion protein from Geobacter sulfurreducens (strain ATCC 51573 / DSM 12127 / PCA).